Reading from the N-terminus, the 44-residue chain is Small, acid-soluble spore protein N (44 aa).

The interval M1–G44 is disordered.

Belongs to the SspN family.

It is found in the spore core. The protein is Small, acid-soluble spore protein N of Bacillus cytotoxicus (strain DSM 22905 / CIP 110041 / 391-98 / NVH 391-98).